The chain runs to 140 residues: MNTLQKIAYRSKQQPLVPLGTLLTTAAVVLAAKSLKQGRKKDTQRYFRYRVGFQAFTLVALVIGGMYYQKESAEQKQTREDKLREKAKLREQLWIEELERRDQLIKARKQRLEESKKELMKVAQEGFEQERERELKKEDK.

Positions 1 to 79 constitute an HIG1 domain; that stretch reads MNTLQKIAYR…KESAEQKQTR (79 aa). 2 helical membrane-spanning segments follow: residues 16 to 32 and 46 to 68; these read LVPLGTLLTTAAVVLAA and YFRYRVGFQAFTLVALVIGGMYY. Residues 68–126 adopt a coiled-coil conformation; it reads YQKESAEQKQTREDKLREKAKLREQLWIEELERRDQLIKARKQRLEESKKELMKVAQEG.

This sequence belongs to the RCF1 family. In terms of assembly, associates with the respiratory chain complex III/complex IV supercomplex.

It localises to the mitochondrion membrane. Its function is as follows. Cytochrome c oxidase subunit which plays a role in assembly of respiratory supercomplexes. This Clavispora lusitaniae (strain ATCC 42720) (Yeast) protein is Respiratory supercomplex factor 1, mitochondrial (RCF1).